Here is a 453-residue protein sequence, read N- to C-terminus: Protein LOW PSII ACCUMULATION 1, chloroplastic (453 aa).

The N-terminal 92 residues, 1-92, are a transit peptide targeting the chloroplast; that stretch reads MAVATAPSLN…LDLFKRGRVK (92 aa). TPR repeat units lie at residues 75–108 and 112–145; these read AELCVNTGLDLFKRGRVKDALVQFETALSLAPNP and QAAYYNKACCHAYRGEGKKAVDCLRIALRDYNLK. 2 consecutive transmembrane segments (helical) span residues 202 to 222 and 238 to 258; these read FFYFAFAAAAGISMFFTVPRL and TTGNAAINIGGIVVMVSLFLW.

As to quaternary structure, interacts with psbA, but not with psbD, petB, ALB3, LPA2 or LPA3. Is not a component of the PSII complex.

Its subcellular location is the plastid. It is found in the chloroplast thylakoid membrane. Its function is as follows. Chaperone required for efficient photosystem II (PSII) assembly. Binds to psbA during de novo biogenesis of PSII. The protein is Protein LOW PSII ACCUMULATION 1, chloroplastic (LPA1) of Arabidopsis thaliana (Mouse-ear cress).